We begin with the raw amino-acid sequence, 294 residues long: Sarcotoxin II-2 (294 aa).

The signal sequence occupies residues 1 to 22; it reads MKSFVFFAACFAIVALNSLAHA. Positions 23–24 are cleaved as a propeptide — removed by a dipeptidylpeptidase; the sequence is YP. Pyrrolidone carboxylic acid is present on Q25. R293 carries the post-translational modification Arginine amide.

This sequence belongs to the attacin/sarcotoxin-2 family. In terms of tissue distribution, synthesized by the fat body and is eventually secreted into the hemolymph.

It is found in the secreted. In terms of biological role, sarcotoxin II is an antibacterial protein which plays a role in the inflammatory response of this insect. The main effect of sarcotoxin II on E.coli may be the inhibition of cell wall synthesis, including septum formation. In Sarcophaga peregrina (Flesh fly), this protein is Sarcotoxin II-2.